We begin with the raw amino-acid sequence, 101 residues long: NAD(P)H-quinone oxidoreductase subunit 4L, chloroplastic (101 aa).

The next 3 membrane-spanning stretches (helical) occupy residues 2 to 22 (MLEY…YGLI), 32 to 52 (MCLE…SDFF), and 61 to 81 (ILSI…PAIV).

The protein belongs to the complex I subunit 4L family. NDH is composed of at least 16 different subunits, 5 of which are encoded in the nucleus.

It is found in the plastid. The protein resides in the chloroplast thylakoid membrane. It carries out the reaction a plastoquinone + NADH + (n+1) H(+)(in) = a plastoquinol + NAD(+) + n H(+)(out). It catalyses the reaction a plastoquinone + NADPH + (n+1) H(+)(in) = a plastoquinol + NADP(+) + n H(+)(out). Functionally, NDH shuttles electrons from NAD(P)H:plastoquinone, via FMN and iron-sulfur (Fe-S) centers, to quinones in the photosynthetic chain and possibly in a chloroplast respiratory chain. The immediate electron acceptor for the enzyme in this species is believed to be plastoquinone. Couples the redox reaction to proton translocation, and thus conserves the redox energy in a proton gradient. The protein is NAD(P)H-quinone oxidoreductase subunit 4L, chloroplastic of Populus alba (White poplar).